Consider the following 260-residue polypeptide: uncharacterized protein (260 aa).

An N-terminal signal peptide occupies residues 1 to 22 (MGNIKSFALYISILLLIVVVAG). C23 is lipidated: N-palmitoyl cysteine. C23 is lipidated: S-diacylglycerol cysteine.

The protein belongs to the staphylococcal tandem lipoprotein family.

Its subcellular location is the cell membrane. This is an uncharacterized protein from Staphylococcus aureus (strain MRSA252).